The primary structure comprises 169 residues: Putative cysteine protease YraA (169 aa).

In terms of domain architecture, PfpI endopeptidase spans 3–169; the sequence is KKIAVLVTDQ…FNRESLNLLK (167 aa). The active-site Nucleophile is Cys-103. The active site involves His-104.

The protein belongs to the peptidase C56 family.

In terms of biological role, functions in the protection against aldehyde-stress, possibly by degrading damaged proteins. The protein is Putative cysteine protease YraA (yraA) of Bacillus subtilis (strain 168).